The primary structure comprises 87 residues: MANSAQARKRARQSVKQRAHNASLRTAFRTAVKKVLKAVEAGDKAAAQAVYQESVKVIDRIADKGVFHKNKAARHKSRLSAKVKALA.

Positions 1–22 (MANSAQARKRARQSVKQRAHNA) are disordered. The segment covering 7-19 (ARKRARQSVKQRA) has biased composition (basic residues).

Belongs to the bacterial ribosomal protein bS20 family.

Binds directly to 16S ribosomal RNA. The protein is Small ribosomal subunit protein bS20 of Neisseria gonorrhoeae (strain ATCC 700825 / FA 1090).